Consider the following 47-residue polypeptide: MKKWLLIIAGALIISACANKDVYFNGAEGSHSGVKFDKDSRQWGLNQ.

Residues 1 to 18 (MKKWLLIIAGALIISACA) form the signal peptide. Residues 28 to 47 (EGSHSGVKFDKDSRQWGLNQ) are disordered.

This is an uncharacterized protein from Haemophilus influenzae (strain ATCC 51907 / DSM 11121 / KW20 / Rd).